The chain runs to 283 residues: 2-dehydro-3-deoxyphosphooctonate aldolase (283 aa).

Belongs to the KdsA family.

It localises to the cytoplasm. The enzyme catalyses D-arabinose 5-phosphate + phosphoenolpyruvate + H2O = 3-deoxy-alpha-D-manno-2-octulosonate-8-phosphate + phosphate. Its pathway is carbohydrate biosynthesis; 3-deoxy-D-manno-octulosonate biosynthesis; 3-deoxy-D-manno-octulosonate from D-ribulose 5-phosphate: step 2/3. It participates in bacterial outer membrane biogenesis; lipopolysaccharide biosynthesis. The chain is 2-dehydro-3-deoxyphosphooctonate aldolase from Synechococcus sp. (strain WH7803).